The sequence spans 776 residues: Probable E3 ubiquitin-protein ligase HECTD2 (776 aa).

The disordered stretch occupies residues 1–46; that stretch reads MSEAVRVPSPATPLVVAAAAPEERKGKESEREKLPPIVSAGAGATA. A compositionally biased stretch (low complexity) spans 7–20; that stretch reads VPSPATPLVVAAAA. Ser-9 is modified (phosphoserine). The segment covering 21 to 34 has biased composition (basic and acidic residues); sequence PEERKGKESEREKL. The region spanning 437–776 is the HECT domain; it reads KRADLKKKLK…ISNSEGFGLE (340 aa). Residue Cys-744 is the Glycyl thioester intermediate of the active site.

It carries out the reaction S-ubiquitinyl-[E2 ubiquitin-conjugating enzyme]-L-cysteine + [acceptor protein]-L-lysine = [E2 ubiquitin-conjugating enzyme]-L-cysteine + N(6)-ubiquitinyl-[acceptor protein]-L-lysine.. Its pathway is protein modification; protein ubiquitination. In terms of biological role, E3 ubiquitin-protein ligase which accepts ubiquitin from an E2 ubiquitin-conjugating enzyme in the form of a thioester and then directly transfers the ubiquitin to targeted substrates. This is Probable E3 ubiquitin-protein ligase HECTD2 (HECTD2) from Pongo abelii (Sumatran orangutan).